We begin with the raw amino-acid sequence, 243 residues long: Uridylate kinase (243 aa).

18–21 (KLGG) contributes to the ATP binding site. Glycine 59 contacts UMP. The ATP site is built by glycine 60 and arginine 64. Residues aspartate 79 and 140–147 (MGMPYFST) each bind UMP. ATP is bound by residues tyrosine 173 and aspartate 176.

This sequence belongs to the UMP kinase family. In terms of assembly, homohexamer.

It localises to the cytoplasm. It carries out the reaction UMP + ATP = UDP + ADP. Its pathway is pyrimidine metabolism; CTP biosynthesis via de novo pathway; UDP from UMP (UMPK route): step 1/1. With respect to regulation, inhibited by UTP. Catalyzes the reversible phosphorylation of UMP to UDP. The protein is Uridylate kinase of Corynebacterium diphtheriae (strain ATCC 700971 / NCTC 13129 / Biotype gravis).